The chain runs to 173 residues: Photosystem I reaction center subunit XI (173 aa).

The next 2 membrane-spanning stretches (helical) occupy residues 92 to 112 and 148 to 168; these read LAGLLAAIGLVVLLTGALSLY and LIGGIGGAVVAYFLTSNLGII.

This sequence belongs to the PsaL family.

It is found in the cellular thylakoid membrane. The chain is Photosystem I reaction center subunit XI from Nostoc punctiforme (strain ATCC 29133 / PCC 73102).